The chain runs to 338 residues: Ornithine carbamoyltransferase, catabolic (338 aa).

Residues 65–68 (STRT), Gln92, Arg116, and 143–146 (HPTQ) contribute to the carbamoyl phosphate site. L-ornithine contacts are provided by residues Asn175, Asp239, and 243–244 (SM). Residues 280-281 (CL) and Arg325 each bind carbamoyl phosphate.

Belongs to the aspartate/ornithine carbamoyltransferase superfamily. OTCase family.

It is found in the cytoplasm. It carries out the reaction carbamoyl phosphate + L-ornithine = L-citrulline + phosphate + H(+). Its pathway is amino-acid degradation; L-arginine degradation via ADI pathway; carbamoyl phosphate from L-arginine: step 2/2. Its function is as follows. Reversibly catalyzes the transfer of the carbamoyl group from carbamoyl phosphate (CP) to the N(epsilon) atom of ornithine (ORN) to produce L-citrulline. The sequence is that of Ornithine carbamoyltransferase, catabolic from Treponema denticola (strain ATCC 35405 / DSM 14222 / CIP 103919 / JCM 8153 / KCTC 15104).